Here is a 382-residue protein sequence, read N- to C-terminus: Intermediate transcription factor 3 large subunit (382 aa).

It belongs to the poxviruses A23 family. Heterodimer of a 45 kDa and a 32 kDa subunit.

Functionally, acts with RNA polymerase to initiate transcription from intermediate gene promoters. The sequence is that of Intermediate transcription factor 3 large subunit (VITF3L) from Oryctolagus cuniculus (Rabbit).